The following is an 86-amino-acid chain: U15-lycotoxin-Ls1g (86 aa).

The N-terminal stretch at 1 to 20 is a signal peptide; it reads MNSKIFAVLLLLGLLSCVLS. A WAP domain is found at 21 to 66; that stretch reads DQYCPKSSITACKKMNIRNDCCKDDDCTGGSWCCATPCGNFCKYPA. 5 cysteine pairs are disulfide-bonded: Cys24/Cys54, Cys32/Cys58, Cys41/Cys53, Cys42/Cys80, and Cys47/Cys62.

The protein belongs to the venom protein 11 family. 01 (wap-1) subfamily. Contains 5 disulfide bonds. In terms of tissue distribution, expressed by the venom gland.

Its subcellular location is the secreted. Functionally, has antibacterial activity. This is U15-lycotoxin-Ls1g from Lycosa singoriensis (Wolf spider).